Reading from the N-terminus, the 87-residue chain is Large ribosomal subunit protein bL31B (87 aa).

It belongs to the bacterial ribosomal protein bL31 family. Type B subfamily. Part of the 50S ribosomal subunit.

This is Large ribosomal subunit protein bL31B from Pseudomonas aeruginosa (strain LESB58).